Consider the following 870-residue polypeptide: Protein RRP6-like 2 (870 aa).

A 3'-5' exonuclease domain is found at 263 to 428; it reads VQEVKDLKEL…YIYDLIKLEL (166 aa). The HRDC domain maps to 479 to 559; the sequence is NAAQLAIVAG…RQSMQHYAAF (81 aa). 4 disordered regions span residues 583–605, 649–668, 688–775, and 821–870; these read SEKK…SSQL, GALL…EKVK, TEKV…EDEP, and FGEG…SFKN. Composition is skewed to basic and acidic residues over residues 720–729 and 821–834; these read SKEDGVKELK and FGEG…KREA. Over residues 840-849 the composition is skewed to polar residues; the sequence is KGSTQEQSEF.

The protein localises to the nucleus. Its subcellular location is the nucleolus. The protein resides in the cytoplasm. Functionally, acts as an important epigenetic regulator through multiple silencing mechanisms. Involved in association with RRP6L1 in the silencing of the solo LTR locus. Controls levels of non-coding RNAs (ncRNAs) from the solo LTR locus. Seems to function independently of the RNA-mediated gene silencing (RdDM) pathway. Functions redundantly with RRP6L1 in the regulation of FLC locus. Participates in the maintenance of trimethylated 'Lys-27' (H3K27me3) at FLC locus via the regulation of antisense long non-coding RNAs (lncRNAs) and the regulation of diverse antisense RNAs derived from the FLC locus. Seems not involved in the exosomal RNA degradation. May be involved in poly(A)-mediated RNA degradation. The sequence is that of Protein RRP6-like 2 from Arabidopsis thaliana (Mouse-ear cress).